The following is a 135-amino-acid chain: Galectin-1 (135 aa).

Position 2 is an N-acetylalanine (Ala-2). One can recognise a Galectin domain in the interval 4-135 (GLVASNLNLK…DFKIKCVAFE (132 aa)). 3 positions are modified to N6-acetyllysine: Lys-13, Lys-19, and Lys-29. The residue at position 30 (Ser-30) is a Phosphoserine. Residues 45–49 (HFNPR), His-53, Asn-62, and 69–72 (WGTE) each bind a beta-D-galactoside. At Lys-108 the chain carries N6-acetyllysine; alternate. Lys-108 carries the N6-succinyllysine; alternate modification. Position 128 is an N6-acetyllysine (Lys-128).

As to quaternary structure, binds LGALS3BP. Interacts with CD2, CD3, CD4, CD6, CD7, CD43, ALCAM and CD45. Interacts with laminin. Interacts with SUSD2. Exists in a reversible and active monomer-homodimer equilibrium, the mononomer/dimer state is regulated by lectin concentration. Interacts with cargo receptor TMED10; the interaction mediates the translocation from the cytoplasm into the ERGIC (endoplasmic reticulum-Golgi intermediate compartment) and thereby secretion.

It is found in the cytoplasm. Its subcellular location is the secreted. The protein localises to the extracellular space. It localises to the extracellular matrix. Its function is as follows. Lectin that binds beta-galactoside and a wide array of complex carbohydrates. Plays a role in regulating apoptosis, cell proliferation and cell differentiation. Inhibits CD45 protein phosphatase activity and therefore the dephosphorylation of Lyn kinase. Strong inducer of T-cell apoptosis. The chain is Galectin-1 (LGALS1) from Cricetulus griseus (Chinese hamster).